Here is a 193-residue protein sequence, read N- to C-terminus: Rho-related protein racF1 (193 aa).

GTP is bound at residue Gly-10–Thr-17. Positions Tyr-32–Tyr-40 match the Effector region motif. GTP is bound by residues Asp-57–Gln-61 and Thr-115–Asp-118. Residue Cys-190 is modified to Cysteine methyl ester. The S-geranylgeranyl cysteine moiety is linked to residue Cys-190. Residues Thr-191–Met-193 constitute a propeptide, removed in mature form.

This sequence belongs to the small GTPase superfamily. Rho family. In terms of assembly, interacts with pakB.

The protein resides in the membrane. Functionally, might act in concert and/or share functions with other members of the RHO family in the regulation of a subset of cytoskeletal rearrangements that are required for these processes. This chain is Rho-related protein racF1 (racF1), found in Dictyostelium discoideum (Social amoeba).